We begin with the raw amino-acid sequence, 306 residues long: Natural cytotoxicity triggering receptor 1 (306 aa).

An N-terminal signal peptide occupies residues 1 to 21 (MSSTLRALLCLGLCLSQRISA). The Extracellular segment spans residues 22–257 (PKQTLPKPII…WDHTAQNLLR (236 aa)). Ig-like domains are found at residues 42–100 (EKQA…SCIY) and 137–192 (GEKV…RCFG). Disulfide bonds link Cys49–Cys98 and Cys144–Cys190. Asn216 carries N-linked (GlcNAc...) asparagine glycosylation. Residues 258 to 278 (MGLAFLVLVALVCLLVEDWLS) form a helical membrane-spanning segment. Topologically, residues 279–306 (RKRTREQASRASTWEGRRRLNKHKDSEE) are cytoplasmic.

It belongs to the natural cytotoxicity receptor (NCR) family. As to quaternary structure, interacts with CD3Z and FCER1G. As to expression, expressed in NK cells.

The protein resides in the cell membrane. Cytotoxicity-activating receptor that may contribute to the increased efficiency of activated natural killer (NK) cells to mediate tumor cell lysis. The protein is Natural cytotoxicity triggering receptor 1 (NCR1) of Macaca fascicularis (Crab-eating macaque).